The primary structure comprises 260 residues: Pyridoxine 5'-phosphate synthase (260 aa).

The 3-amino-2-oxopropyl phosphate site is built by N7 and R18. H43 (proton acceptor) is an active-site residue. Positions 45 and 50 each coordinate 1-deoxy-D-xylulose 5-phosphate. The Proton acceptor role is filled by E83. A 1-deoxy-D-xylulose 5-phosphate-binding site is contributed by T113. Catalysis depends on H208, which acts as the Proton donor. 3-amino-2-oxopropyl phosphate-binding positions include D209 and 230–231 (GH).

The protein belongs to the PNP synthase family. In terms of assembly, homooctamer; tetramer of dimers.

The protein resides in the cytoplasm. The catalysed reaction is 3-amino-2-oxopropyl phosphate + 1-deoxy-D-xylulose 5-phosphate = pyridoxine 5'-phosphate + phosphate + 2 H2O + H(+). It functions in the pathway cofactor biosynthesis; pyridoxine 5'-phosphate biosynthesis; pyridoxine 5'-phosphate from D-erythrose 4-phosphate: step 5/5. Its function is as follows. Catalyzes the complicated ring closure reaction between the two acyclic compounds 1-deoxy-D-xylulose-5-phosphate (DXP) and 3-amino-2-oxopropyl phosphate (1-amino-acetone-3-phosphate or AAP) to form pyridoxine 5'-phosphate (PNP) and inorganic phosphate. The chain is Pyridoxine 5'-phosphate synthase from Leptospira biflexa serovar Patoc (strain Patoc 1 / Ames).